A 416-amino-acid chain; its full sequence is Gamma-glutamyl phosphate reductase (416 aa).

It belongs to the gamma-glutamyl phosphate reductase family.

It localises to the cytoplasm. The catalysed reaction is L-glutamate 5-semialdehyde + phosphate + NADP(+) = L-glutamyl 5-phosphate + NADPH + H(+). It functions in the pathway amino-acid biosynthesis; L-proline biosynthesis; L-glutamate 5-semialdehyde from L-glutamate: step 2/2. Functionally, catalyzes the NADPH-dependent reduction of L-glutamate 5-phosphate into L-glutamate 5-semialdehyde and phosphate. The product spontaneously undergoes cyclization to form 1-pyrroline-5-carboxylate. This chain is Gamma-glutamyl phosphate reductase, found in Salmonella heidelberg (strain SL476).